Consider the following 370-residue polypeptide: Notoamide biosynthesis cluster protein J (370 aa).

The first 22 residues, 1–22 (MRIMSIMLHLLATILLSSAVSA), serve as a signal peptide directing secretion. 7 N-linked (GlcNAc...) asparagine glycosylation sites follow: N159, N167, N192, N235, N282, N340, and N346.

Part of the gene cluster that mediates the biosynthesis of notoamide, a fungal indole alkaloid that belongs to a family of natural products containing a characteristic bicyclo[2.2.2]diazaoctane core. The first step of notoamide biosynthesis involves coupling of L-proline and L-tryptophan by the bimodular NRPS notE, to produce cyclo-L-tryptophan-L-proline called brevianamide F. The reverse prenyltransferase notF then acts as a deoxybrevianamide E synthase and converts brevianamide F to deoxybrevianamide E via reverse prenylation at C-2 of the indole ring leading to the bicyclo[2.2.2]diazaoctane core. Deoxybrevianamide E is further hydroxylated at C-6 of the indole ring, likely catalyzed by the cytochrome P450 monooxygenase notG, to yield 6-hydroxy-deoxybrevianamide E. 6-hydroxy-deoxybrevianamide E is a specific substrate of the prenyltransferase notC for normal prenylation at C-7 to produce 6-hydroxy-7-prenyl-deoxybrevianamide, also called notoamide S. As the proposed pivotal branching point in notoamide biosynthesis, notoamide S can be diverted to notoamide E through an oxidative pyran ring closure putatively catalyzed by either notH cytochrome P450 monooxygenase or the notD FAD-linked oxidoreductase. This step would be followed by an indole 2,3-epoxidation-initiated pinacol-like rearrangement catalyzed by the notB FAD-dependent monooxygenase leading to the formation of notoamide C and notoamide D. On the other hand notoamide S is converted to notoamide T by notH (or notD), a bifunctional oxidase that also functions as the intramolecular Diels-Alderase responsible for generation of (+)-notoamide T. To generate antipodal (-)-notoaminide T, notH' (or notD') in Aspergillus versicolor is expected to catalyze a Diels-Alder reaction leading to the opposite stereochemistry. The remaining oxidoreductase notD (or notH) likely catalyzes the oxidative pyran ring formation to yield (+)-stephacidin A. The FAD-dependent monooxygenase notI is highly similar to notB and is predicted to catalyze a similar conversion from (+)-stephacidin A to (-)-notoamide B via the 2,3-epoxidation of (+)-stephacidin A followed by a pinacol-type rearrangement. Finally, it remains unclear which enzyme could be responsible for the final hydroxylation steps leading to notoamide A and sclerotiamide. The function of notJ in the notoamide biosynthesis has not been determined yet. This is Notoamide biosynthesis cluster protein J from Aspergillus sp. (strain MF297-2).